A 548-amino-acid chain; its full sequence is Natural resistance-associated macrophage protein 1 (548 aa).

A disordered region spans residues 1-38 (MSGDTGPPKQGGTRYGSISSPPSPEPQQAPPGGTYLSE). The Cytoplasmic portion of the chain corresponds to 1 to 55 (MSGDTGPPKQGGTRYGSISSPPSPEPQQAPPGGTYLSEKIPIPDTESGTFSLRKL). The chain crosses the membrane as a helical span at residues 56–73 (WAFTGPGFLMSIAFLDPG). Over 74–82 (NIESDLQAG) the chain is Extracellular. Residues 83 to 102 (AVAGFKLLWVLLWATVLGLL) form a helical membrane-spanning segment. Residues 103 to 139 (CQRLAARLGVVTGKDLGEVCHLYYPKVPRILLWLTIE) are Cytoplasmic-facing. The chain crosses the membrane as a helical span at residues 140–160 (LAIVGSDMQEVIGTAIAFSLL). Residues 161-164 (SAGR) are Extracellular-facing. A helical transmembrane segment spans residues 165–184 (IPLWGGVLITVVDTFFFLFL). Residues 185 to 193 (DNYGLRKLE) are Cytoplasmic-facing. Residues 194 to 214 (AFFGFLITIMALTFGYEYVVA) traverse the membrane as a helical segment. Residues 215 to 237 (QPAQGALLQGLFLPSCPGCGQPE) are Extracellular-facing. The helical transmembrane segment at 238-256 (LLQAVGIIGAIIMPHNIYL) threads the bilayer. Residues 257-284 (HSSLVKSREVDRSRRADIREANMYFLIE) are Cytoplasmic-facing. Residues 285–304 (ATIALSVSFLINLFVMAVFG) traverse the membrane as a helical segment. Residues 305 to 346 (QAFYKQTNQAAFNICADSSLHDYAPIFPRNNLTVAVDIYQGG) lie on the Extracellular side of the membrane. N335 carries an N-linked (GlcNAc...) asparagine glycan. Residues 347 to 366 (VILGCLFGPPALYIWAVGLL) form a helical membrane-spanning segment. Over 367-397 (AAGQSSTMTGTYAGQFVMEGFLKLRWSRFAR) the chain is Cytoplasmic. The helical transmembrane segment at 398–415 (VLLTRSCAILPTVLLAVF) threads the bilayer. Residues 416–426 (RDLRDLSGLND) lie on the Extracellular side of the membrane. The chain crosses the membrane as a helical span at residues 427–447 (LLNVLQSLLLPFAVLPILTFT). Residues 448–463 (SMPALMQEFANGLVSK) lie on the Cytoplasmic side of the membrane. A helical membrane pass occupies residues 464–485 (VITSSIMVLVCAVNLYFVISYL). Over 486 to 493 (PSLPHPAY) the chain is Extracellular. A helical transmembrane segment spans residues 494–513 (FSLVALLAAAYLGLTTYLVW). Residues 514 to 548 (TCLITQGATLLAHSSHQRFLYGLPEEDQEKGRTSG) are Cytoplasmic-facing.

Belongs to the NRAMP family.

The protein resides in the late endosome membrane. Its subcellular location is the lysosome membrane. The enzyme catalyses Zn(2+)(in) + H(+)(out) = Zn(2+)(out) + H(+)(in). The catalysed reaction is Fe(2+)(in) + H(+)(out) = Fe(2+)(out) + H(+)(in). It catalyses the reaction Mn(2+)(in) + H(+)(out) = Mn(2+)(out) + H(+)(in). Functionally, macrophage-specific antiporter that fluxes metal ions in either direction against a proton gradient. Localized to late endosomal lysosomal membranes, delivers bivalent cations from the cytosol into these acidic compartments where they may directly affect antimicrobial activity. Involved in iron metabolism and host natural resistance to infection with intracellular parasites. Pathogen resistance involves sequestration of Fe(2+) and Mn(2+), cofactors of both prokaryotic and eukaryotic catalases and superoxide dismutases, not only to protect the macrophage against its own generation of reactive oxygen species, but to deny the cations to the pathogen for synthesis of its protective enzymes. The chain is Natural resistance-associated macrophage protein 1 (SLC11A1) from Bos taurus (Bovine).